The chain runs to 85 residues: Large ribosomal subunit protein bL27 (85 aa).

Belongs to the bacterial ribosomal protein bL27 family.

This chain is Large ribosomal subunit protein bL27, found in Variovorax paradoxus (strain S110).